Reading from the N-terminus, the 393-residue chain is Chorismate synthase (393 aa).

NADP(+) is bound by residues Arg-40 and Arg-46. FMN contacts are provided by residues 129-131, 249-250, Gly-301, 316-320, and Arg-342; these read RSS, QA, and KPIPT.

It belongs to the chorismate synthase family. In terms of assembly, homotetramer. The cofactor is FMNH2.

It carries out the reaction 5-O-(1-carboxyvinyl)-3-phosphoshikimate = chorismate + phosphate. The protein operates within metabolic intermediate biosynthesis; chorismate biosynthesis; chorismate from D-erythrose 4-phosphate and phosphoenolpyruvate: step 7/7. Functionally, catalyzes the anti-1,4-elimination of the C-3 phosphate and the C-6 proR hydrogen from 5-enolpyruvylshikimate-3-phosphate (EPSP) to yield chorismate, which is the branch point compound that serves as the starting substrate for the three terminal pathways of aromatic amino acid biosynthesis. This reaction introduces a second double bond into the aromatic ring system. This is Chorismate synthase from Geotalea daltonii (strain DSM 22248 / JCM 15807 / FRC-32) (Geobacter daltonii).